Here is a 388-residue protein sequence, read N- to C-terminus: Succinate--CoA ligase [ADP-forming] subunit beta (388 aa).

One can recognise an ATP-grasp domain in the interval 9 to 245 (KELLAGYGLP…KSQENERELK (237 aa)). ATP is bound by residues Lys46, 53–55 (GRG), Glu100, Tyr103, and Glu108. Mg(2+) is bound by residues Asn200 and Asp214. Substrate contacts are provided by residues Asn265 and 322–324 (GIV).

It belongs to the succinate/malate CoA ligase beta subunit family. Heterotetramer of two alpha and two beta subunits. Mg(2+) serves as cofactor.

The catalysed reaction is succinate + ATP + CoA = succinyl-CoA + ADP + phosphate. It carries out the reaction GTP + succinate + CoA = succinyl-CoA + GDP + phosphate. The protein operates within carbohydrate metabolism; tricarboxylic acid cycle; succinate from succinyl-CoA (ligase route): step 1/1. Its function is as follows. Succinyl-CoA synthetase functions in the citric acid cycle (TCA), coupling the hydrolysis of succinyl-CoA to the synthesis of either ATP or GTP and thus represents the only step of substrate-level phosphorylation in the TCA. The beta subunit provides nucleotide specificity of the enzyme and binds the substrate succinate, while the binding sites for coenzyme A and phosphate are found in the alpha subunit. This chain is Succinate--CoA ligase [ADP-forming] subunit beta, found in Neisseria meningitidis serogroup C (strain 053442).